Consider the following 142-residue polypeptide: Probable transport accessory protein MmpS1 (142 aa).

2 helical membrane passes run 8 to 28 and 81 to 101; these read FWIP…VSRL and VVNA…AVVA.

The protein belongs to the MmpS family.

The protein resides in the cell membrane. This is Probable transport accessory protein MmpS1 (mmpS1) from Mycobacterium bovis (strain ATCC BAA-935 / AF2122/97).